The sequence spans 450 residues: Glutamyl-tRNA reductase (450 aa).

Substrate is bound by residues Thr-50 to Arg-53, Ser-109, Glu-114 to Gln-116, and Gln-120. Catalysis depends on Cys-51, which acts as the Nucleophile. Gly-189 to Ala-194 is a binding site for NADP(+). A disordered region spans residues Asn-422–Leu-450.

This sequence belongs to the glutamyl-tRNA reductase family. As to quaternary structure, homodimer.

The catalysed reaction is (S)-4-amino-5-oxopentanoate + tRNA(Glu) + NADP(+) = L-glutamyl-tRNA(Glu) + NADPH + H(+). Its pathway is porphyrin-containing compound metabolism; protoporphyrin-IX biosynthesis; 5-aminolevulinate from L-glutamyl-tRNA(Glu): step 1/2. Catalyzes the NADPH-dependent reduction of glutamyl-tRNA(Glu) to glutamate 1-semialdehyde (GSA). This is Glutamyl-tRNA reductase from Oleidesulfovibrio alaskensis (strain ATCC BAA-1058 / DSM 17464 / G20) (Desulfovibrio alaskensis).